Reading from the N-terminus, the 203-residue chain is uncharacterized protein (203 aa).

Residues S117 to A138 are disordered. Polar residues predominate over residues Q124–A138.

The protein localises to the cytoplasm. The protein resides in the nucleus. This is an uncharacterized protein from Schizosaccharomyces pombe (strain 972 / ATCC 24843) (Fission yeast).